A 405-amino-acid chain; its full sequence is S-adenosylmethionine synthase (405 aa).

An ATP-binding site is contributed by 139–144; the sequence is GQGSVD.

The protein belongs to the AdoMet synthase 2 family. Mg(2+) is required as a cofactor.

The enzyme catalyses L-methionine + ATP + H2O = S-adenosyl-L-methionine + phosphate + diphosphate. It participates in amino-acid biosynthesis; S-adenosyl-L-methionine biosynthesis; S-adenosyl-L-methionine from L-methionine: step 1/1. In terms of biological role, catalyzes the formation of S-adenosylmethionine from methionine and ATP. The protein is S-adenosylmethionine synthase of Thermococcus gammatolerans (strain DSM 15229 / JCM 11827 / EJ3).